Reading from the N-terminus, the 396-residue chain is MQNMVILGATGSIGASTLNVVACNPEQYKVFALVANTNVAKMLEICIAHQPKIAHMVDAKAAQALKQQLPSHLKIEVTTGEDELLSLVSCSEVDTVMAAIVGAAGLPSTLAAVNAGKRVLLANKESLVMSGQLFIEAMQNSGAQVLPVDSEHNAIFQCLSERSQLEIGRCDLTGAGVSHILLTGSGGPFLTSDLSSLVNMTPDQACKHPNWSMGRKISVDSATMMNKGLEYIEARWLFNASSDQLKVVIHPQSVIHSMVQYRDGSVLAQLGNPDMRTPIAHCMSFPQRISSGVEPLDFFKVGQLSFLEPDFNRFPCLALAIEACKQGQEATTVLNAANEISVQAFLDGKIRFTDIAKINEQSLMNTATHPLNCIDDILALDFQSRQYTLNAITKLN.

Residues threonine 10, glycine 11, serine 12, isoleucine 13, asparagine 38, and asparagine 123 each coordinate NADPH. Lysine 124 contributes to the 1-deoxy-D-xylulose 5-phosphate binding site. Glutamate 125 is an NADPH binding site. A Mn(2+)-binding site is contributed by aspartate 149. Serine 150, glutamate 151, serine 185, and histidine 208 together coordinate 1-deoxy-D-xylulose 5-phosphate. A Mn(2+)-binding site is contributed by glutamate 151. Glycine 214 serves as a coordination point for NADPH. The 1-deoxy-D-xylulose 5-phosphate site is built by serine 221, asparagine 226, lysine 227, and glutamate 230. Position 230 (glutamate 230) interacts with Mn(2+).

This sequence belongs to the DXR family. Mg(2+) serves as cofactor. Mn(2+) is required as a cofactor.

It carries out the reaction 2-C-methyl-D-erythritol 4-phosphate + NADP(+) = 1-deoxy-D-xylulose 5-phosphate + NADPH + H(+). It participates in isoprenoid biosynthesis; isopentenyl diphosphate biosynthesis via DXP pathway; isopentenyl diphosphate from 1-deoxy-D-xylulose 5-phosphate: step 1/6. In terms of biological role, catalyzes the NADPH-dependent rearrangement and reduction of 1-deoxy-D-xylulose-5-phosphate (DXP) to 2-C-methyl-D-erythritol 4-phosphate (MEP). This is 1-deoxy-D-xylulose 5-phosphate reductoisomerase from Shewanella pealeana (strain ATCC 700345 / ANG-SQ1).